A 390-amino-acid chain; its full sequence is 8-amino-7-oxononanoate synthase (390 aa).

R19 is a binding site for substrate. 106 to 107 serves as a coordination point for pyridoxal 5'-phosphate; that stretch reads GY. H131 is a binding site for substrate. Residues S176, H204, and T233 each contribute to the pyridoxal 5'-phosphate site. Position 236 is an N6-(pyridoxal phosphate)lysine (K236). T350 lines the substrate pocket.

This sequence belongs to the class-II pyridoxal-phosphate-dependent aminotransferase family. BioF subfamily. Homodimer. It depends on pyridoxal 5'-phosphate as a cofactor.

It carries out the reaction 6-carboxyhexanoyl-[ACP] + L-alanine + H(+) = (8S)-8-amino-7-oxononanoate + holo-[ACP] + CO2. It functions in the pathway cofactor biosynthesis; biotin biosynthesis. Functionally, catalyzes the decarboxylative condensation of pimeloyl-[acyl-carrier protein] and L-alanine to produce 8-amino-7-oxononanoate (AON), [acyl-carrier protein], and carbon dioxide. This is 8-amino-7-oxononanoate synthase from Pseudomonas entomophila (strain L48).